Consider the following 555-residue polypeptide: Protein tyrosine phosphatase-like protein egg-3 (555 aa).

2 consecutive short sequence motifs (D-box) follow at residues 96–99 (RILL) and 130–133 (RDRL). Residues 207–514 (FVQEFNRLDR…LFIYRVILRW (308 aa)) form the Tyrosine-protein phosphatase domain. An RXXL motif; required for cortical localization motif is present at residues 253–256 (RVKL). Residues 266-269 (RNEL) carry the RXXL motif motif. 2 consecutive short sequence motifs (RXXL motif; required for cortical localization) follow at residues 509 to 512 (RVIL) and 525 to 528 (RAAL).

This sequence belongs to the protein-tyrosine phosphatase family. Part of a complex, consisting of pseudophosphatases egg-3, egg-4, egg-5 and kinase mbk-2; this complex is required for the oocyte-to-zygote transition. Interacts (via tyrosine-protein phosphatase domain) with kinase mbk-2 (via N-terminus); the interaction does not affect mbk-2 kinase activity, is enhanced by mbk-2 tyrosine phosphorylation status and requires prior binding of mbk-2 to egg-4 and egg-5. Interacts with egg-4.

Its subcellular location is the cytoplasm. The protein localises to the cell cortex. In terms of biological role, probable pseudophosphatase required for the oocyte-to-zygote transition during which it regulates the polarized dispersal of the cortical actin cytoskeleton, the synthesis of the eggshell chitin layer and the formation of the polar bodies after meiosis I and II. Acts as a scaffold to tether kinase mbk-2 and pseudophosphatases egg-4 and egg-5 to the oocyte cortex and thus restricts mbk-2 activity to the cortex during meiosis I. Regulates mbk-2 localization to cytoplasmic foci during meiosis II. Also required for chitin synthase chs-1 localization to the cell cortex of unfertilized oocytes and to cytoplasmic foci in the fertilized embryo. This is Protein tyrosine phosphatase-like protein egg-3 from Caenorhabditis elegans.